The following is a 458-amino-acid chain: Phosphomethylpyrimidine synthase (458 aa).

Residues Asn-80, Met-109, Tyr-139, His-175, 195–197, 236–239, and Glu-275 each bind substrate; these read SRG and DSLR. His-279 serves as a coordination point for Zn(2+). Tyr-302 lines the substrate pocket. Position 343 (His-343) interacts with Zn(2+). Residues Cys-423, Cys-426, and Cys-431 each coordinate [4Fe-4S] cluster.

Belongs to the ThiC family. [4Fe-4S] cluster serves as cofactor.

It catalyses the reaction 5-amino-1-(5-phospho-beta-D-ribosyl)imidazole + S-adenosyl-L-methionine = 4-amino-2-methyl-5-(phosphooxymethyl)pyrimidine + CO + 5'-deoxyadenosine + formate + L-methionine + 3 H(+). It functions in the pathway cofactor biosynthesis; thiamine diphosphate biosynthesis. Catalyzes the synthesis of the hydroxymethylpyrimidine phosphate (HMP-P) moiety of thiamine from aminoimidazole ribotide (AIR) in a radical S-adenosyl-L-methionine (SAM)-dependent reaction. This chain is Phosphomethylpyrimidine synthase, found in Cyanothece sp. (strain PCC 7425 / ATCC 29141).